The primary structure comprises 804 residues: Leucine--tRNA ligase (804 aa).

Positions 39–50 match the 'HIGH' region motif; it reads PFPSGKGLHVGH. The short motif at 573-577 is the 'KMSKS' region element; that stretch reads KMSKS. K576 contacts ATP.

Belongs to the class-I aminoacyl-tRNA synthetase family.

Its subcellular location is the cytoplasm. The enzyme catalyses tRNA(Leu) + L-leucine + ATP = L-leucyl-tRNA(Leu) + AMP + diphosphate. This chain is Leucine--tRNA ligase, found in Lactobacillus gasseri (strain ATCC 33323 / DSM 20243 / BCRC 14619 / CIP 102991 / JCM 1131 / KCTC 3163 / NCIMB 11718 / NCTC 13722 / AM63).